We begin with the raw amino-acid sequence, 138 residues long: Putative pre-16S rRNA nuclease (138 aa).

This sequence belongs to the YqgF nuclease family.

It is found in the cytoplasm. In terms of biological role, could be a nuclease involved in processing of the 5'-end of pre-16S rRNA. The protein is Putative pre-16S rRNA nuclease of Clostridium tetani (strain Massachusetts / E88).